Here is a 440-residue protein sequence, read N- to C-terminus: Putative short-chain fatty acid transporter (440 aa).

The Periplasmic portion of the chain corresponds to Met1–Asp19. A helical membrane pass occupies residues Pro20–Pro40. Over Gln41–Gly53 the chain is Cytoplasmic. A helical transmembrane segment spans residues Phe54–Leu74. The Periplasmic portion of the chain corresponds to Ala75–Thr102. The chain crosses the membrane as a helical span at residues Phe103–Phe123. Topologically, residues Ala124–Pro137 are cytoplasmic. The next 2 membrane-spanning stretches (helical) occupy residues Leu138–Met158 and Pro159–Gly179. Position 180 (Asp180) is a topological domain, cytoplasmic. A helical membrane pass occupies residues Thr181–Ile201. Residues Thr202 to Arg244 are Periplasmic-facing. 2 consecutive transmembrane segments (helical) span residues Ile245–His265 and Gly266–His286. The Periplasmic portion of the chain corresponds to Lys287–Tyr313. Residues Ala314–Ile334 form a helical membrane-spanning segment. The Cytoplasmic portion of the chain corresponds to Asn335–Ala351. A helical transmembrane segment spans residues Leu352 to Ile372. Residues Pro373 to Gln394 lie on the Periplasmic side of the membrane. Residues Trp395–Val415 form a helical membrane-spanning segment. Over Arg416–Met419 the chain is Cytoplasmic. Residues Gly420 to Phe440 form a helical membrane-spanning segment.

It is found in the cell inner membrane. May be responsible for the uptake of short-chain fatty acids. This chain is Putative short-chain fatty acid transporter (atoE), found in Escherichia coli (strain K12).